We begin with the raw amino-acid sequence, 1067 residues long: MIDSSKKQQQQPPQHYSFADILSAGDLDPLKEKEWLDPGSQKSLKEVLQLRLQQRRTREQLVDQGIMPPLKSPAAFHEQIKSLERARTENFLKHKIRSRPNRSELVRMHILEETLAEPSLQATQLKLKRARLADDLNEKIAQRPGPLELVEKNILPVDLSVKEAITVSQTNLPENLDTLSFDEDSSDALSPEQPASQESQGSAASPGEMKTSDSSSPVSNTTIQCQTVSSPLPDFFKPVPTADLTTRSPLSCIVSKPGPALIKQTQPKHTEKPRSKKSKDPKPRVKKLKYHQYIPPDQKGEKIEEEMDSNYARLLQQQQLVLQLQILSQQHSTLTTSRKSYPAPLKSQKKQNTINTTICNGNAGAPPAQCSVNRQNSVPCKKTGPLPSSLDDMKVAELKMELKLRGLPVSGTKMDLIERLKPFQDFSSNGVSPSSANTVNITNPACNTTDDATTAFSTSALINSSSPTPSVSIGNNQTMLDGINSPLPMSPTPSEQSNFSSEDTNITDTFAEILTMMSPSQFMNTSPLKVNEDSMGATPGNTPNVELDAVEKDRKLQEKEKQIEELKRKLEQEQKLVEVLKKQLELEKRGQQQQPCSNVLLKMEPKHFNLQIKEETEAPDCQNSKQPVGSGGQILGQATAATISQNIIANNAVVIKHEVPLAKPEHQNVIQQFYVTSQRPPQTAVVAQPQALLATQTAQLLLPLSIKAANGVQLSMVQAQPHTVNPAPAQLSTAAATTTTLLSAPPKQSAPPTQDKFTPHLLNQNQQIRKLCPSATSGNVFSYPQNPVTAVPQSFSASISTSAQPQRSTQLTAVQNGPTSLHEKSSTPPQLQQFIVQQHPLFSSPTTKSKDPPRYEEAIKQARNNPASQPEVSNAHSQQMDDLFDILIKSGEMSPLIKEPSPISKMRPVTANVTTMPVNTVVSRPPPQIHMAPPLSLESTNSLSVSLESQLEAFLDGTLPSGNNIPHLESNSDDRETFSLIDDLNNDLLQNTAMLEHESTPMETTDTPFTANSCLSLDLADANLDNMEWLDLTMPNSSSSLTPLSSTLPSMFSTDFLDSNDLHLHWE.

RPEL repeat units follow at residues 46–71 (EVLQLRLQQRRTREQLVDQGIMPPLK), 90–115 (NFLKHKIRSRPNRSELVRMHILEETL), and 134–159 (DDLNEKIAQRPGPLELVEKNILPVDL). Disordered regions lie at residues 175 to 223 (NLDT…NTTI) and 249 to 286 (PLSCIVSKPGPALIKQTQPKHTEKPRSKKSKDPKPRVK). 2 stretches are compositionally biased toward polar residues: residues 193 to 203 (QPASQESQGSA) and 212 to 223 (SDSSSPVSNTTI). Positions 268–283 (KHTEKPRSKKSKDPKP) are enriched in basic and acidic residues. Residues 390 to 424 (LDDMKVAELKMELKLRGLPVSGTKMDLIERLKPFQ) form the SAP domain. The stretch at 540–594 (GNTPNVELDAVEKDRKLQEKEKQIEELKRKLEQEQKLVEVLKKQLELEKRGQQQQ) forms a coiled coil. Residues 799 to 819 (ISTSAQPQRSTQLTAVQNGPT) are compositionally biased toward polar residues. Residues 799–829 (ISTSAQPQRSTQLTAVQNGPTSLHEKSSTPP) are disordered.

Interacts with SRF.

The protein resides in the nucleus. Poor transcriptional factor which uses the canonical single or multiple CArG boxes DNA sequence. Acts as a cofactor of serum response factor (SRF) with the potential to modulate SRF target genes. The protein is Myocardin-related transcription factor B (mrtfb) of Xenopus laevis (African clawed frog).